We begin with the raw amino-acid sequence, 461 residues long: Bifunctional protein GlmU (461 aa).

Residues 1 to 229 are pyrophosphorylase; it reads MEKYVVVLAA…FSESLGVNDR (229 aa). UDP-N-acetyl-alpha-D-glucosamine is bound by residues 8–11, lysine 22, glutamine 72, and 77–78; these read LAAG and GT. Aspartate 102 lines the Mg(2+) pocket. Residues glycine 139, glutamate 154, asparagine 169, and asparagine 227 each coordinate UDP-N-acetyl-alpha-D-glucosamine. Asparagine 227 contacts Mg(2+). Positions 230-250 are linker; it reads VALAQATKTMQRRINEAHMRD. Positions 251-461 are N-acetyltransferase; sequence GVSFIDPDTA…LPLSKDKDWE (211 aa). Positions 332 and 350 each coordinate UDP-N-acetyl-alpha-D-glucosamine. Histidine 362 (proton acceptor) is an active-site residue. UDP-N-acetyl-alpha-D-glucosamine is bound by residues tyrosine 365 and asparagine 376. Residues 385-386, alanine 422, and arginine 439 contribute to the acetyl-CoA site; that span reads NY.

The protein in the N-terminal section; belongs to the N-acetylglucosamine-1-phosphate uridyltransferase family. It in the C-terminal section; belongs to the transferase hexapeptide repeat family. As to quaternary structure, homotrimer. Mg(2+) serves as cofactor.

The protein localises to the cytoplasm. The catalysed reaction is alpha-D-glucosamine 1-phosphate + acetyl-CoA = N-acetyl-alpha-D-glucosamine 1-phosphate + CoA + H(+). It carries out the reaction N-acetyl-alpha-D-glucosamine 1-phosphate + UTP + H(+) = UDP-N-acetyl-alpha-D-glucosamine + diphosphate. Its pathway is nucleotide-sugar biosynthesis; UDP-N-acetyl-alpha-D-glucosamine biosynthesis; N-acetyl-alpha-D-glucosamine 1-phosphate from alpha-D-glucosamine 6-phosphate (route II): step 2/2. It functions in the pathway nucleotide-sugar biosynthesis; UDP-N-acetyl-alpha-D-glucosamine biosynthesis; UDP-N-acetyl-alpha-D-glucosamine from N-acetyl-alpha-D-glucosamine 1-phosphate: step 1/1. It participates in bacterial outer membrane biogenesis; LPS lipid A biosynthesis. In terms of biological role, catalyzes the last two sequential reactions in the de novo biosynthetic pathway for UDP-N-acetylglucosamine (UDP-GlcNAc). The C-terminal domain catalyzes the transfer of acetyl group from acetyl coenzyme A to glucosamine-1-phosphate (GlcN-1-P) to produce N-acetylglucosamine-1-phosphate (GlcNAc-1-P), which is converted into UDP-GlcNAc by the transfer of uridine 5-monophosphate (from uridine 5-triphosphate), a reaction catalyzed by the N-terminal domain. The protein is Bifunctional protein GlmU of Lactobacillus helveticus (strain DPC 4571).